We begin with the raw amino-acid sequence, 469 residues long: Protein RUFY3 (469 aa).

Thr5 and Thr12 each carry phosphothreonine. Residues Ser34 and Ser49 each carry the phosphoserine modification. Phosphothreonine is present on Thr51. Residues Asp95 to Glu227 form the RUN domain. Coiled coils occupy residues Asn271 to Glu362 and Lys422 to Lys463.

In terms of assembly, interacts with PAK1. Interacts (via C-terminus) with Ras-related Rab-5 proteins. Interacts (via C-terminus) with Ras-related Rap-2 proteins. Interacts with PIK3CA and PIK3R1. Interacts (via N-terminus) with FSCN1; this interaction induces neuron axon development. Interacts with DBN1. Interacts (via the second coiled coil) with GTP-, but not GDP-bound ARL8A and ARL8B. Interacts with dynactin/DCTN1 and the dynein intermediate chain DYNC1I1/2. Directly interacts with DYNC1LI1. In terms of processing, isoform 1 is partially phosphorylated. Phosphorylated by PAK1. As to expression, expressed in brain (at protein level).

The protein resides in the cytoplasm. Its subcellular location is the endomembrane system. The protein localises to the cell projection. It is found in the invadopodium. It localises to the growth cone. The protein resides in the perikaryon. Its subcellular location is the filopodium. The protein localises to the lamellipodium. It is found in the lysosome. Its function is as follows. ARL8 effector that promotes the coupling of endolysosomes to dynein-dynactin for retrograde transport along microtubules. Acts by binding both GTP-bound ARL8 and dynein-dynactin. In nonneuronal cells, promotes concentration of endolysosomes in the juxtanuclear area. In hippocampal neurons, drives retrograde transport of endolysosomes from the axon to the soma. Plays a role in the generation of neuronal polarity formation and axon growth. Implicated in the formation of a single axon by developing neurons. May inhibit the formation of additional axons by inhibition of PI3K in minor neuronal processes. Plays a role in the formation of F-actin-enriched protrusive structures at the cell periphery. Plays a role in cytoskeletal organization by regulating the subcellular localization of FSCN1 and DBN1 at axonal growth cones. The protein is Protein RUFY3 of Rattus norvegicus (Rat).